Consider the following 138-residue polypeptide: Basic phospholipase A2 homolog Vur-S49 (138 aa).

Positions 1-16 (MRALWIVAVCLIGVEG) are cleaved as a signal peptide. Intrachain disulfides connect Cys-42–Cys-131, Cys-44–Cys-60, Cys-59–Cys-111, Cys-65–Cys-138, Cys-66–Cys-104, Cys-73–Cys-97, and Cys-91–Cys-102. The tract at residues 121–133 (KKYKVYLRFKCKG) is important for membrane-damaging activities in eukaryotes and bacteria; heparin-binding.

The protein belongs to the phospholipase A2 family. Group II subfamily. S49 sub-subfamily. In terms of tissue distribution, expressed by the venom gland.

Its subcellular location is the secreted. In terms of biological role, snake venom phospholipase A2 homolog that lacks enzymatic activity. Is able to suppress the acetylcholine (ACh)-evoked current mediated by alpha-7 (CHRNA7)-similar nAChRs in L.stagnalis neurons (IC(50)=2.18 uM). This activity is only partially reversible and seems to be non-competitive. This chain is Basic phospholipase A2 homolog Vur-S49, found in Vipera renardi (Steppe viper).